A 553-amino-acid chain; its full sequence is Putative transport protein YidE (553 aa).

The next 5 membrane-spanning stretches (helical) occupy residues 4-24, 28-48, 65-85, 95-115, and 158-178; these read IALT…IGNV, GIGL…HFVS, FGLI…FFAS, LFAV…HKLF, and MSYA…MWML. RCK C-terminal domains are found at residues 191 to 276 and 279 to 361; these read QQHE…VIGQ and DTSL…VLGN. 6 helical membrane passes run 371-391, 393-413, 431-448, 464-484, 493-513, and 533-553; these read MLPV…PVFV, GFPA…ALIL, NLAL…VVGL, LSWI…VGIL, YLTM…LAFA, and LVMF…WSIG.

Belongs to the AAE transporter (TC 2.A.81) family. YidE subfamily.

The protein resides in the cell membrane. This chain is Putative transport protein YidE, found in Shigella sonnei (strain Ss046).